The primary structure comprises 71 residues: Antitoxin VapB26 (71 aa).

Its function is as follows. Antitoxin component of a type II toxin-antitoxin (TA) system. Upon expression in M.smegmatis neutralizes the effect of cognate toxin VapC26. The polypeptide is Antitoxin VapB26 (vapB26) (Mycobacterium tuberculosis (strain ATCC 25618 / H37Rv)).